The primary structure comprises 318 residues: Lipoyl synthase 1 (318 aa).

A disordered region spans residues 6 to 32 (DTISNPLRPRHPEKVNRPDSASPPKPD). Residues cysteine 60, cysteine 65, cysteine 71, cysteine 86, cysteine 90, cysteine 93, and serine 299 each coordinate [4Fe-4S] cluster. One can recognise a Radical SAM core domain in the interval 72–288 (WDKKHATFMI…EKVAYTKGFL (217 aa)).

It belongs to the radical SAM superfamily. Lipoyl synthase family. The cofactor is [4Fe-4S] cluster.

Its subcellular location is the cytoplasm. The catalysed reaction is [[Fe-S] cluster scaffold protein carrying a second [4Fe-4S](2+) cluster] + N(6)-octanoyl-L-lysyl-[protein] + 2 oxidized [2Fe-2S]-[ferredoxin] + 2 S-adenosyl-L-methionine + 4 H(+) = [[Fe-S] cluster scaffold protein] + N(6)-[(R)-dihydrolipoyl]-L-lysyl-[protein] + 4 Fe(3+) + 2 hydrogen sulfide + 2 5'-deoxyadenosine + 2 L-methionine + 2 reduced [2Fe-2S]-[ferredoxin]. The protein operates within protein modification; protein lipoylation via endogenous pathway; protein N(6)-(lipoyl)lysine from octanoyl-[acyl-carrier-protein]: step 2/2. Functionally, catalyzes the radical-mediated insertion of two sulfur atoms into the C-6 and C-8 positions of the octanoyl moiety bound to the lipoyl domains of lipoate-dependent enzymes, thereby converting the octanoylated domains into lipoylated derivatives. This is Lipoyl synthase 1 from Bradyrhizobium diazoefficiens (strain JCM 10833 / BCRC 13528 / IAM 13628 / NBRC 14792 / USDA 110).